Reading from the N-terminus, the 344-residue chain is Adenine deaminase (344 aa).

Zn(2+) is bound by residues H24, H26, and H204. E207 (proton donor) is an active-site residue. D285 serves as a coordination point for Zn(2+). Substrate is bound at residue D286.

Belongs to the metallo-dependent hydrolases superfamily. Adenosine and AMP deaminases family. Adenine deaminase type 2 subfamily. Zn(2+) is required as a cofactor.

It carries out the reaction adenine + H2O + H(+) = hypoxanthine + NH4(+). In terms of biological role, catalyzes the hydrolytic deamination of adenine to hypoxanthine. Plays an important role in the purine salvage pathway and in nitrogen catabolism. This is Adenine deaminase from Caulobacter vibrioides (strain ATCC 19089 / CIP 103742 / CB 15) (Caulobacter crescentus).